Consider the following 117-residue polypeptide: Non-specific lipid-transfer protein 1 (117 aa).

Residues 1–26 (MARAQVLLMAAALVLMLTAAPRAAVA) form the signal peptide. 4 disulfide bridges follow: Cys29/Cys76, Cys39/Cys53, Cys54/Cys99, and Cys74/Cys113. Asp33 is lipidated: Cis-14-hydroxy-10,13-dioxo-7-heptadecenoic acid aspartate ester.

This sequence belongs to the plant LTP family. In terms of tissue distribution, aleurone layer of developing and germinating seeds.

In terms of biological role, plant non-specific lipid-transfer proteins transfer phospholipids as well as galactolipids across membranes. May play a role in wax or cutin deposition in the cell walls of expanding epidermal cells and certain secretory tissues. This is Non-specific lipid-transfer protein 1 (LTP1) from Hordeum vulgare (Barley).